The following is a 32-amino-acid chain: Calcitonin (32 aa).

C1 and C7 are oxidised to a cystine. P32 is modified (proline amide).

This sequence belongs to the calcitonin family.

The protein resides in the secreted. In terms of biological role, calcitonin is a peptide hormone that causes a rapid but short-lived drop in the level of calcium and phosphate in blood by promoting the incorporation of those ions in the bones. Calcitonin function is mediated by the calcitonin receptor/CALCR and the CALCR-RAMP2 (AMYR2) receptor complex. The sequence is that of Calcitonin (CALCA) from Sus scrofa (Pig).